The chain runs to 483 residues: Glutamate mutase epsilon subunit (483 aa).

Arginine 66 contacts L-glutamate. Glycine 68 serves as a coordination point for adenosylcob(III)alamin. Position 100 (arginine 100) interacts with L-glutamate. Residue asparagine 123 participates in adenosylcob(III)alamin binding. Residues 149 to 150 (RH), glutamate 171, and tyrosine 177 contribute to the L-glutamate site. Proline 180 is an adenosylcob(III)alamin binding site. Tyrosine 181 contacts L-glutamate. Residues phenylalanine 297, lysine 326, glutamate 330, and isoleucine 334 each contribute to the adenosylcob(III)alamin site.

The protein belongs to the methylaspartate mutase GlmE subunit family. In terms of assembly, heterotetramer composed of 2 epsilon subunits (GlmE) and 2 sigma subunits (GlmS). GlmE exists as a homodimer and GlmS as a monomer. It depends on adenosylcob(III)alamin as a cofactor.

It carries out the reaction (2S,3S)-3-methyl-L-aspartate = L-glutamate. The protein operates within amino-acid degradation; L-glutamate degradation via mesaconate pathway; acetate and pyruvate from L-glutamate: step 1/4. Competitively inhibited by (2S,4S)-4-fluoroglutamate, 2-methyleneglutarate, (2R,3RS)-3-fluoroglutamate and (S)-3-methylitaconate. Its function is as follows. Catalyzes the carbon skeleton rearrangement of L-glutamate to L-threo-3-methylaspartate ((2S,3S)-3-methylaspartate). The polypeptide is Glutamate mutase epsilon subunit (Clostridium cochlearium).